Reading from the N-terminus, the 423-residue chain is Glucose-1-phosphate adenylyltransferase (423 aa).

Alpha-D-glucose 1-phosphate is bound by residues tyrosine 108, glycine 173, 188-189 (EK), and serine 207.

Belongs to the bacterial/plant glucose-1-phosphate adenylyltransferase family. Homotetramer.

It carries out the reaction alpha-D-glucose 1-phosphate + ATP + H(+) = ADP-alpha-D-glucose + diphosphate. It participates in glycan biosynthesis; glycogen biosynthesis. Functionally, involved in the biosynthesis of ADP-glucose, a building block required for the elongation reactions to produce glycogen. Catalyzes the reaction between ATP and alpha-D-glucose 1-phosphate (G1P) to produce pyrophosphate and ADP-Glc. This chain is Glucose-1-phosphate adenylyltransferase, found in Francisella tularensis subsp. tularensis (strain WY96-3418).